The following is a 931-amino-acid chain: Kinesin heavy chain (931 aa).

The Kinesin motor domain maps to 6–329 (SIKVVARFRP…LRFGMRAKSI (324 aa)). ATP is bound by residues 87-94 (GQTGAGKS) and 237-244 (GSEKVGKT). Residues 342–864 (AELKSLLKKA…VKERLELAKA (523 aa)) are a coiled coil. 2 disordered regions span residues 388 to 465 (TTDA…EKQL) and 886 to 931 (AKPL…FTKS). Residues 402 to 419 (STRPSTPSLISDSRSETP) show a composition bias toward polar residues. Positions 432 to 456 (LDKDEREEFLRRENELQDQISEKES) are enriched in basic and acidic residues. Residues 902 to 931 (PTIQNLQGQNEGNTSSGSSSKRASWFFTKS) show a composition bias toward polar residues.

Belongs to the TRAFAC class myosin-kinesin ATPase superfamily. Kinesin family. Kinesin subfamily.

The protein resides in the cytoplasm. It is found in the cytoskeleton. Its function is as follows. Kinesin is a microtubule-associated force-producing protein that may play a role in organelle transport. Its motor activity is directed toward the microtubule's plus end. This chain is Kinesin heavy chain (KLP1), found in Gibberella moniliformis (Maize ear and stalk rot fungus).